Consider the following 213-residue polypeptide: Leucyl/phenylalanyl-tRNA--protein transferase (213 aa).

It belongs to the L/F-transferase family.

The protein localises to the cytoplasm. The catalysed reaction is N-terminal L-lysyl-[protein] + L-leucyl-tRNA(Leu) = N-terminal L-leucyl-L-lysyl-[protein] + tRNA(Leu) + H(+). It carries out the reaction N-terminal L-arginyl-[protein] + L-leucyl-tRNA(Leu) = N-terminal L-leucyl-L-arginyl-[protein] + tRNA(Leu) + H(+). The enzyme catalyses L-phenylalanyl-tRNA(Phe) + an N-terminal L-alpha-aminoacyl-[protein] = an N-terminal L-phenylalanyl-L-alpha-aminoacyl-[protein] + tRNA(Phe). In terms of biological role, functions in the N-end rule pathway of protein degradation where it conjugates Leu, Phe and, less efficiently, Met from aminoacyl-tRNAs to the N-termini of proteins containing an N-terminal arginine or lysine. The polypeptide is Leucyl/phenylalanyl-tRNA--protein transferase (Rhodospirillum rubrum (strain ATCC 11170 / ATH 1.1.1 / DSM 467 / LMG 4362 / NCIMB 8255 / S1)).